Reading from the N-terminus, the 370-residue chain is Protein-tyrosine sulfotransferase 1 (370 aa).

Residues 1–8 (MVGKLKQN) are Cytoplasmic-facing. Residues 9 to 25 (LLLACLVISSVTVFYLG) traverse the membrane as a helical; Signal-anchor for type II membrane protein segment. Topologically, residues 26 to 370 (QHAMECHHRI…KEKPQTEQVE (345 aa)) are lumenal. The N-linked (GlcNAc...) asparagine glycan is linked to Asn60. 79 to 83 (RSGTT) lines the 3'-phosphoadenylyl sulfate pocket. Cysteines 97 and 157 form a disulfide. The Proton donor/acceptor role is filled by Glu100. An interaction with peptide substrate region spans residues 102–106 (RVIPR). Residues Arg184, Ser192, and Arg196 each contribute to the 3'-phosphoadenylyl sulfate site. A disulfide bond links Cys226 and Cys234. 3'-phosphoadenylyl sulfate is bound at residue Tyr239. A glycan (N-linked (GlcNAc...) asparagine) is linked at Asn262. 3'-phosphoadenylyl sulfate contacts are provided by residues 286-295 (STDQVIKPVN) and Lys301.

The protein belongs to the protein sulfotransferase family. As to quaternary structure, homodimer. Can also form heterodimers with TPST2. Post-translationally, N-glycosylated. As to expression, ubiquitous. Detected in heart, brain, lung, liver, spleen, kidney, skeletal muscle and testis.

The protein resides in the golgi apparatus membrane. The catalysed reaction is L-tyrosyl-[protein] + 3'-phosphoadenylyl sulfate = O-sulfo-L-tyrosine-[protein] + adenosine 3',5'-bisphosphate + H(+). In terms of biological role, catalyzes the O-sulfation of tyrosine residues within acidic motifs of polypeptides, using 3'-phosphoadenylyl sulfate (PAPS) as cosubstrate. This chain is Protein-tyrosine sulfotransferase 1 (Tpst1), found in Mus musculus (Mouse).